The following is a 472-amino-acid chain: Dihydrolipoyl dehydrogenase 2 (472 aa).

FAD is bound by residues 39–47 (ERDAYGGTC), Lys56, and Ala118. The cysteines at positions 47 and 52 are disulfide-linked. NAD(+)-binding positions include 186 to 190 (GAGYI), Glu209, and 275 to 278 (AVGR). FAD contacts are provided by Asp318 and Ala326. His450 serves as the catalytic Proton acceptor.

It belongs to the class-I pyridine nucleotide-disulfide oxidoreductase family. Homodimer. Requires FAD as cofactor.

The protein localises to the cytoplasm. It catalyses the reaction N(6)-[(R)-dihydrolipoyl]-L-lysyl-[protein] + NAD(+) = N(6)-[(R)-lipoyl]-L-lysyl-[protein] + NADH + H(+). The polypeptide is Dihydrolipoyl dehydrogenase 2 (lpdA2) (Haloarcula marismortui (strain ATCC 43049 / DSM 3752 / JCM 8966 / VKM B-1809) (Halobacterium marismortui)).